The chain runs to 359 residues: Phospho-N-acetylmuramoyl-pentapeptide-transferase (359 aa).

The next 10 helical transmembrane spans lie at 3–23, 55–75, 80–100, 117–137, 156–176, 187–207, 231–251, 255–275, 280–300, and 334–354; these read QILV…PALI, VAIV…GLAF, VSAS…VGFL, TAKT…VLQF, IATV…IVSA, LDGL…LITF, LTLI…WNAA, IFMG…LSVT, ILAV…VLQI, and FWLL…GEWL.

This sequence belongs to the glycosyltransferase 4 family. MraY subfamily. Mg(2+) is required as a cofactor.

The protein localises to the cell membrane. The catalysed reaction is UDP-N-acetyl-alpha-D-muramoyl-L-alanyl-gamma-D-glutamyl-meso-2,6-diaminopimeloyl-D-alanyl-D-alanine + di-trans,octa-cis-undecaprenyl phosphate = di-trans,octa-cis-undecaprenyl diphospho-N-acetyl-alpha-D-muramoyl-L-alanyl-D-glutamyl-meso-2,6-diaminopimeloyl-D-alanyl-D-alanine + UMP. It participates in cell wall biogenesis; peptidoglycan biosynthesis. Its function is as follows. Catalyzes the initial step of the lipid cycle reactions in the biosynthesis of the cell wall peptidoglycan: transfers peptidoglycan precursor phospho-MurNAc-pentapeptide from UDP-MurNAc-pentapeptide onto the lipid carrier undecaprenyl phosphate, yielding undecaprenyl-pyrophosphoryl-MurNAc-pentapeptide, known as lipid I. This is Phospho-N-acetylmuramoyl-pentapeptide-transferase from Mycobacterium leprae (strain TN).